The chain runs to 390 residues: Isoaspartyl dipeptidase (390 aa).

Residues H68 and H70 each coordinate Zn(2+). Residues 75 to 77 (GGE), T106, and Y137 contribute to the substrate site. K162 serves as a coordination point for Zn(2+). K162 is subject to N6-carboxylysine. R169 serves as a coordination point for substrate. Residues H201 and H230 each coordinate Zn(2+). R233 contacts substrate. Position 285 (D285) interacts with Zn(2+). D285 functions as the Proton acceptor in the catalytic mechanism. S289 provides a ligand contact to substrate.

The protein belongs to the peptidase M38 family. Requires Zn(2+) as cofactor. Co(2+) serves as cofactor. In terms of processing, carboxylation allows a single lysine to coordinate two zinc ions.

The protein resides in the cytoplasm. Its activity is regulated as follows. P-hydroxymercuribenzoate causes a slight inhibition (8 to 17 %). Iodoacetamide, o-iodosobenzoate and ammonium persulfate do not inhibit the enzyme activity. Catalyzes the hydrolytic cleavage of a subset of L-isoaspartyl (L-beta-aspartyl) dipeptides. Used to degrade proteins damaged by L-isoaspartyl residues formation. The best substrate for the enzyme reported thus far is iso-Asp-Leu. This chain is Isoaspartyl dipeptidase (iadA), found in Escherichia coli (strain K12).